A 1940-amino-acid polypeptide reads, in one-letter code: Myosin-3 (1940 aa).

In terms of domain architecture, Myosin N-terminal SH3-like spans 33 to 82 (DAKTYCFVVDSKEEYVKGKIKSSQDGKVTVETEDSRTLVVKPEDVYAMNP). The Myosin motor domain maps to 86–779 (DKIEDMAMLT…LLGTLEEMRD (694 aa)). An N6,N6,N6-trimethyllysine modification is found at lysine 130. An ATP-binding site is contributed by 179–186 (GESGAGKT). Actin-binding regions lie at residues 656-678 (LNKLMSNLRTTHPHFVRCIIPNE) and 758-772 (KFGHTKVFFKAGLLG). The IQ domain maps to 782-811 (LAKLITRTQAVCRGFLMRVEFQKMMQRRES). Positions 841–1928 (LKSAETEKEM…NKLRAKTRDF (1088 aa)) form a coiled coil. The tract at residues 1260 to 1289 (ARGKNEEMQRSLSELTTQKSRLQTEAGELS) is disordered. Positions 1269-1282 (RSLSELTTQKSRLQ) are enriched in polar residues.

The protein belongs to the TRAFAC class myosin-kinesin ATPase superfamily. Myosin family. In terms of assembly, muscle myosin is a hexameric protein that consists of 2 heavy chain subunits (MHC), 2 alkali light chain subunits (MLC) and 2 regulatory light chain subunits (MLC-2).

It is found in the cytoplasm. It localises to the myofibril. Muscle contraction. In Mus musculus (Mouse), this protein is Myosin-3 (Myh3).